The chain runs to 136 residues: Phospholipase A2 (136 aa).

The Ca(2+) site is built by Trp-8, Gly-10, and Gly-12. Intrachain disulfides connect Cys-9–Cys-31, Cys-30–Cys-70, Cys-37–Cys-63, Cys-61–Cys-95, and Cys-105–Cys-117. The N-linked (GlcNAc...) asparagine glycan is linked to Asn-16. The active site involves His-34. Asp-35 lines the Ca(2+) pocket. The active site involves Asp-64.

It belongs to the phospholipase A2 family. Ca(2+) is required as a cofactor. As to expression, expressed by the venom gland.

The protein localises to the secreted. The enzyme catalyses a 1,2-diacyl-sn-glycero-3-phosphocholine + H2O = a 1-acyl-sn-glycero-3-phosphocholine + a fatty acid + H(+). Functionally, PLA2 catalyzes the calcium-dependent hydrolysis of the 2-acyl groups in 3-sn-phosphoglycerides. The chain is Phospholipase A2 from Bombus terrestris (Buff-tailed bumblebee).